Consider the following 493-residue polypeptide: Dipeptide permease D (493 aa).

A run of 13 helical transmembrane segments spans residues V14 to L34, E49 to A69, L91 to V111, G138 to C158, W167 to C187, N212 to W232, W235 to Y255, L267 to G287, M312 to V332, I344 to L364, L379 to M399, V413 to I433, and V458 to L478.

The protein belongs to the major facilitator superfamily. Proton-dependent oligopeptide transporter (POT/PTR) (TC 2.A.17) family. DtpD subfamily.

The protein resides in the cell inner membrane. Its function is as follows. Probable proton-dependent permease that transports dipeptides. This is Dipeptide permease D from Salmonella paratyphi C (strain RKS4594).